The sequence spans 601 residues: Zinc finger protein 37 (601 aa).

The KRAB domain occupies 1–70 (MATPEPAESD…VRANKNSSSS (70 aa)). Position 3 is a phosphothreonine (threonine 3). Serine 9 carries the post-translational modification Phosphoserine. Residues 30–43 (ETCSNPASMGNQDP) show a composition bias toward polar residues. Residues 30–254 (ETCSNPASMG…SKSDKAPGSG (225 aa)) form a disordered region. Residues 60–70 (SVRANKNSSSS) show a composition bias toward low complexity. A compositionally biased stretch (polar residues) spans 77–88 (TGTSAKVQQDGA). Composition is skewed to basic and acidic residues over residues 115 to 136 (KSSECTLLEKKNVHSKHDPSEK), 164 to 174 (KKPDTANEYRK), and 183 to 238 (VNRD…EKRK). The segment at 257–279 (YECNQCGKVLSHKQGLLDHQRTH) adopts a C2H2-type 1 zinc-finger fold. The C2H2-type 2; atypical zinc finger occupies 285–303 (YECYECGIAFSQKSHLVVH). 10 consecutive C2H2-type zinc fingers follow at residues 314–337 (YECVQCGKAHGHKHALTDHLRISH), 343–365 (YKCNECGKTFRHSSNLMQHIRSH), 371–393 (YECKECGKSFRYNSSFTEHVRTH), 399–421 (YECNECGKAFKYGSSLTKHMRIH), 427–449 (FECTECGKTFSKKSHLVIHQRTH), 455–477 (YKCKECGKAFGHSSSLTYHMRTH), 483–505 (FECNKCGKAFKQIEGLTQHQRVH), 511–533 (YECVECGKAFSQKSHLIVHQRTH), 539–561 (FECYECGKAFNAKSQLVIHQRSH), and 570–592 (YECVECGKAFKQNASLTRHMKTH).

This sequence belongs to the krueppel C2H2-type zinc-finger protein family. As to expression, expressed in testes, brain, kidney, spleen, thymus, lung, and at low levels in liver.

It localises to the nucleus. May be involved in transcriptional regulation. This is Zinc finger protein 37 (Zfp37) from Rattus norvegicus (Rat).